A 503-amino-acid polypeptide reads, in one-letter code: Maturase K (503 aa).

This sequence belongs to the intron maturase 2 family. MatK subfamily.

Its subcellular location is the plastid. It is found in the chloroplast. Functionally, usually encoded in the trnK tRNA gene intron. Probably assists in splicing its own and other chloroplast group II introns. The chain is Maturase K from Rosa californica (California wild rose).